We begin with the raw amino-acid sequence, 500 residues long: Glycerol kinase (500 aa).

Residue Thr-13 coordinates ADP. ATP is bound by residues Thr-13, Thr-14, and Ser-15. Thr-13 is a binding site for sn-glycerol 3-phosphate. ADP is bound at residue Arg-17. 4 residues coordinate sn-glycerol 3-phosphate: Arg-83, Glu-84, Tyr-135, and Asp-244. The glycerol site is built by Arg-83, Glu-84, Tyr-135, Asp-244, and Gln-245. ADP is bound by residues Thr-266, Gly-309, Gly-410, and Asn-414. ATP contacts are provided by Thr-266, Gly-309, and Gly-410.

It belongs to the FGGY kinase family.

The catalysed reaction is glycerol + ATP = sn-glycerol 3-phosphate + ADP + H(+). Its pathway is polyol metabolism; glycerol degradation via glycerol kinase pathway; sn-glycerol 3-phosphate from glycerol: step 1/1. Its activity is regulated as follows. Inhibited by fructose 1,6-bisphosphate (FBP). Its function is as follows. Key enzyme in the regulation of glycerol uptake and metabolism. Catalyzes the phosphorylation of glycerol to yield sn-glycerol 3-phosphate. The chain is Glycerol kinase from Chromobacterium violaceum (strain ATCC 12472 / DSM 30191 / JCM 1249 / CCUG 213 / NBRC 12614 / NCIMB 9131 / NCTC 9757 / MK).